We begin with the raw amino-acid sequence, 424 residues long: Keratin, type I cytoskeletal 20 (424 aa).

Residues 1 to 69 are head; that stretch reads MDFSRRSFHR…TGGGDLFVGN (69 aa). Serine 13 carries the phosphoserine; by MAPKAPK2, MAPKAPK3 and PKC modification. Positions 70-105 are coil 1A; that stretch reads EKMAMQNLNDRLASYLEKVRTLEQSNSKLEVQIKQW. One can recognise an IF rod domain in the interval 70-381; that stretch reads EKMAMQNLND…RLLEGEDVKT (312 aa). The linker 1 stretch occupies residues 106-123; it reads YETNAPRAGRDYSAYYRQ. Residues 124–215 form a coil 1B region; sequence IEELRSQIKD…KEHQEEVDGL (92 aa). Residues 216-238 are linker 12; that stretch reads HKHLGNTVNVEVDAAPGLNLGVI. Positions 239–377 are coil 2; the sequence is MNEMRQKYEV…ATYRRLLEGE (139 aa). Residues 378–424 form a tail region; that stretch reads DVKTTEYQLSTLEERDIKKTRKIKTVVQEVVDGKVVSSEVKEVEENI.

This sequence belongs to the intermediate filament family. Heterotetramer of two type I and two type II keratins. Associates with KRT8. Hyperphosphorylation at Ser-13 occurs during the early stages of apoptosis but becomes less prominent during the later stages. Phosphorylation at Ser-13 also increases in response to stress brought on by cell injury. In terms of processing, proteolytically cleaved by caspases during apoptosis. Cleavage occurs at Asp-228. As to expression, expressed predominantly in the intestinal epithelium. Expressed in luminal cells of colonic mucosa. Also expressed in the Merkel cells of keratinized oral mucosa; specifically at the tips of some rete ridges of the gingival mucosa, in the basal layer of the palatal mucosa and in the taste buds of lingual mucosa.

The protein localises to the cytoplasm. Functionally, plays a significant role in maintaining keratin filament organization in intestinal epithelia. When phosphorylated, plays a role in the secretion of mucin in the small intestine. The sequence is that of Keratin, type I cytoskeletal 20 (KRT20) from Homo sapiens (Human).